Reading from the N-terminus, the 362-residue chain is Phospho-N-acetylmuramoyl-pentapeptide-transferase (362 aa).

10 consecutive transmembrane segments (helical) span residues 28-48, 72-92, 94-114, 131-151, 169-189, 200-220, 236-256, 264-284, 290-310, and 339-359; these read IISF…VITW, TPTM…MVCA, LSNI…ILGL, VLHK…IIFM, FMPQ…VGTS, GLAI…AWIS, FSGE…GFLW, IFMG…IAVL, LLLI…LQVI, and IIVR…ITLK.

The protein belongs to the glycosyltransferase 4 family. MraY subfamily. The cofactor is Mg(2+).

The protein localises to the cell inner membrane. It catalyses the reaction UDP-N-acetyl-alpha-D-muramoyl-L-alanyl-gamma-D-glutamyl-meso-2,6-diaminopimeloyl-D-alanyl-D-alanine + di-trans,octa-cis-undecaprenyl phosphate = di-trans,octa-cis-undecaprenyl diphospho-N-acetyl-alpha-D-muramoyl-L-alanyl-D-glutamyl-meso-2,6-diaminopimeloyl-D-alanyl-D-alanine + UMP. The protein operates within cell wall biogenesis; peptidoglycan biosynthesis. Its function is as follows. Catalyzes the initial step of the lipid cycle reactions in the biosynthesis of the cell wall peptidoglycan: transfers peptidoglycan precursor phospho-MurNAc-pentapeptide from UDP-MurNAc-pentapeptide onto the lipid carrier undecaprenyl phosphate, yielding undecaprenyl-pyrophosphoryl-MurNAc-pentapeptide, known as lipid I. The polypeptide is Phospho-N-acetylmuramoyl-pentapeptide-transferase (Blochmanniella pennsylvanica (strain BPEN)).